A 126-amino-acid polypeptide reads, in one-letter code: Aspartate 1-decarboxylase (126 aa).

The Schiff-base intermediate with substrate; via pyruvic acid role is filled by serine 25. At serine 25 the chain carries Pyruvic acid (Ser). Residue threonine 57 coordinates substrate. The Proton donor role is filled by tyrosine 58. Residue 73–75 participates in substrate binding; it reads GGA.

Belongs to the PanD family. In terms of assembly, heterooctamer of four alpha and four beta subunits. Requires pyruvate as cofactor. Post-translationally, is synthesized initially as an inactive proenzyme, which is activated by self-cleavage at a specific serine bond to produce a beta-subunit with a hydroxyl group at its C-terminus and an alpha-subunit with a pyruvoyl group at its N-terminus.

It is found in the cytoplasm. It catalyses the reaction L-aspartate + H(+) = beta-alanine + CO2. It participates in cofactor biosynthesis; (R)-pantothenate biosynthesis; beta-alanine from L-aspartate: step 1/1. Functionally, catalyzes the pyruvoyl-dependent decarboxylation of aspartate to produce beta-alanine. The polypeptide is Aspartate 1-decarboxylase (Acinetobacter baumannii (strain ACICU)).